We begin with the raw amino-acid sequence, 158 residues long: Dysbindin domain-containing protein 1 (158 aa).

A disordered region spans residues Met1–Met38. Phosphoserine is present on residues Ser95 and Ser119. Positions Asp96–Asp158 are disordered. A compositionally biased stretch (basic and acidic residues) spans Thr125 to Arg141.

The protein belongs to the dysbindin family.

The sequence is that of Dysbindin domain-containing protein 1 (DBNDD1) from Bos taurus (Bovine).